The chain runs to 184 residues: Shikimate kinase (184 aa).

An ATP-binding site is contributed by 17–22; the sequence is GAGKTT. Residue T21 coordinates Mg(2+). Substrate-binding residues include D39, R63, and G85. R123 is an ATP binding site. R142 contacts substrate.

This sequence belongs to the shikimate kinase family. In terms of assembly, monomer. Mg(2+) serves as cofactor.

It is found in the cytoplasm. It carries out the reaction shikimate + ATP = 3-phosphoshikimate + ADP + H(+). The protein operates within metabolic intermediate biosynthesis; chorismate biosynthesis; chorismate from D-erythrose 4-phosphate and phosphoenolpyruvate: step 5/7. Its function is as follows. Catalyzes the specific phosphorylation of the 3-hydroxyl group of shikimic acid using ATP as a cosubstrate. This is Shikimate kinase from Burkholderia pseudomallei (strain 1710b).